Consider the following 305-residue polypeptide: Sulfate adenylyltransferase subunit 2 (305 aa).

It belongs to the PAPS reductase family. CysD subfamily. In terms of assembly, heterodimer composed of CysD, the smaller subunit, and CysN.

It catalyses the reaction sulfate + ATP + H(+) = adenosine 5'-phosphosulfate + diphosphate. Its pathway is sulfur metabolism; hydrogen sulfide biosynthesis; sulfite from sulfate: step 1/3. Functionally, with CysN forms the ATP sulfurylase (ATPS) that catalyzes the adenylation of sulfate producing adenosine 5'-phosphosulfate (APS) and diphosphate, the first enzymatic step in sulfur assimilation pathway. APS synthesis involves the formation of a high-energy phosphoric-sulfuric acid anhydride bond driven by GTP hydrolysis by CysN coupled to ATP hydrolysis by CysD. This Pseudomonas savastanoi pv. phaseolicola (strain 1448A / Race 6) (Pseudomonas syringae pv. phaseolicola (strain 1448A / Race 6)) protein is Sulfate adenylyltransferase subunit 2.